The following is a 286-amino-acid chain: Rhomboid-type serine protease 2 (286 aa).

Helical transmembrane passes span 18-38 (ITQY…LLVI), 66-86 (SFYL…VGLF), 99-119 (VFTG…FCIV), 122-142 (LLYP…FMSF), 164-183 (VSIP…MVLI), and 188-210 (FWGH…KFLY). Catalysis depends on Ser133, which acts as the Nucleophile. The active site involves His191.

It belongs to the peptidase S54 family.

Its subcellular location is the golgi apparatus membrane. The protein resides in the golgi apparatus. The protein localises to the cis-Golgi network membrane. It carries out the reaction Cleaves type-1 transmembrane domains using a catalytic dyad composed of serine and histidine that are contributed by different transmembrane domains.. Functionally, probable rhomboid-type serine protease that catalyzes intramembrane proteolysis. In Debaryomyces hansenii (strain ATCC 36239 / CBS 767 / BCRC 21394 / JCM 1990 / NBRC 0083 / IGC 2968) (Yeast), this protein is Rhomboid-type serine protease 2 (RBD2).